The following is a 174-amino-acid chain: RNA pyrophosphohydrolase (174 aa).

Positions 14 to 167 constitute a Nudix hydrolase domain; the sequence is PYRPCVGLMV…KRKVYEEVVA (154 aa). Positions 55–76 match the Nudix box motif; that stretch reads GGIDKGEEPLEAAIRELYEETG.

This sequence belongs to the Nudix hydrolase family. RppH subfamily. A divalent metal cation is required as a cofactor.

Functionally, accelerates the degradation of transcripts by removing pyrophosphate from the 5'-end of triphosphorylated RNA, leading to a more labile monophosphorylated state that can stimulate subsequent ribonuclease cleavage. The chain is RNA pyrophosphohydrolase from Brucella anthropi (strain ATCC 49188 / DSM 6882 / CCUG 24695 / JCM 21032 / LMG 3331 / NBRC 15819 / NCTC 12168 / Alc 37) (Ochrobactrum anthropi).